The chain runs to 255 residues: MQIMDYQFPYCSYPYNFSDKIKFCIGKIVCKTFDVIGIKIYSKITGIYLEPEKISSYNLSDTNHQISNEKNLIYSNIKWLIVGITIIPTIYYGTKLQYIPESKLWYIGTPLVFMNLFNTLSHICQYIQLKLHTDKLKHNIEITNSLENPICILDSIDYDSIISTRKLIWSTTKVNHNYVVYNAFYSDLFFVFDREKMLNDFILEKLSKLSENDIDCLANDPSRNRLVQQMQDEFIRNKLYLLLMQCYRHQYTNSS.

N-linked (GlcNAc...) asparagine; by host glycans are attached at residues Asn16 and Asn58. Helical transmembrane passes span 72 to 92 (LIYSNIKWLIVGITIIPTIYY) and 104 to 124 (LWYIGTPLVFMNLFNTLSHIC).

The protein resides in the membrane. This is an uncharacterized protein from Acanthamoeba polyphaga (Amoeba).